Here is a 263-residue protein sequence, read N- to C-terminus: Bidirectional sugar transporter SWEET3 (263 aa).

The Extracellular portion of the chain corresponds to 1–7 (MGDKLRL). Residues 8–28 (SIGILGNGASLLLYTAPIVTF) form a helical membrane-spanning segment. Residues 9–97 (IGILGNGASL…FIYFYYASPK (89 aa)) enclose the MtN3/slv 1 domain. Over 29–42 (SRVFKKKSTEEFSC) the chain is Cytoplasmic. The helical transmembrane segment at 43 to 63 (FPYVMTLFNCLIYTWYGLPIV) threads the bilayer. Residues 64-71 (SHLWENLP) lie on the Extracellular side of the membrane. The helical transmembrane segment at 72 to 92 (LVTINGVGILLESIFIFIYFY) threads the bilayer. Residues 93-103 (YASPKEKIKVG) lie on the Cytoplasmic side of the membrane. The helical transmembrane segment at 104 to 124 (VTFVPVIVGFGLTTAISALVF) threads the bilayer. Over 125 to 132 (DDHRHRKS) the chain is Extracellular. A helical transmembrane segment spans residues 133 to 153 (FVGSVGLVASISMYGSPLVVM). The 85-residue stretch at 133-217 (FVGSVGLVAS…ILYFKYKNKK (85 aa)) folds into the MtN3/slv 2 domain. The Cytoplasmic portion of the chain corresponds to 154-165 (KKVIETRSVEYM). A helical transmembrane segment spans residues 166–186 (PFYLSFFSFLASSLWLAYGLL). Residues 187-190 (SHDL) lie on the Extracellular side of the membrane. A helical membrane pass occupies residues 191 to 211 (FLASPNMVATPLGILQLILYF). The Cytoplasmic segment spans residues 212–263 (KYKNKKDLAPTTMVITKRNDHDDKNKATLEFVVDVDRNSDTNEKNSNNASSI).

It belongs to the SWEET sugar transporter family. In terms of assembly, forms heterooligomers with SWEET11, SWEET13 and SWEET17.

The protein localises to the cell membrane. In terms of biological role, mediates both low-affinity uptake and efflux of sugar across the plasma membrane. The chain is Bidirectional sugar transporter SWEET3 from Arabidopsis thaliana (Mouse-ear cress).